A 330-amino-acid chain; its full sequence is Ubiquinone biosynthesis protein COQ4, mitochondrial (330 aa).

A mitochondrion-targeting transit peptide spans 1-31 (MLQSTKVTKSVLTNVLRVEQRRGFLLSGAAV). Residues histidine 212, aspartate 213, histidine 216, and glutamate 228 each contribute to the Zn(2+) site.

It belongs to the COQ4 family. Component of a multi-subunit COQ enzyme complex, composed of at least COQ3, COQ4, COQ5, COQ6, COQ7 and COQ9. Zn(2+) is required as a cofactor.

Its subcellular location is the mitochondrion inner membrane. The catalysed reaction is a 4-hydroxy-3-methoxy-5-(all-trans-polyprenyl)benzoate + H(+) = a 2-methoxy-6-(all-trans-polyprenyl)phenol + CO2. It functions in the pathway cofactor biosynthesis; ubiquinone biosynthesis. Functionally, lyase that catalyzes the C1-decarboxylation of 4-hydroxy-3-methoxy-5-(all-trans-polyprenyl)benzoic acid into 2-methoxy-6-(all-trans-polyprenyl)phenol during ubiquinone biosynthesis. This is Ubiquinone biosynthesis protein COQ4, mitochondrial from Candida glabrata (strain ATCC 2001 / BCRC 20586 / JCM 3761 / NBRC 0622 / NRRL Y-65 / CBS 138) (Yeast).